Reading from the N-terminus, the 603-residue chain is Glutamyl-tRNA(Gln) amidotransferase subunit B, mitochondrial (603 aa).

Disordered stretches follow at residues 38 to 61 (RGRDWSSTSRRAIDTQTSGASNGA) and 72 to 91 (EQAREGRAATRKGEVSPPEH). Residues 42–58 (WSSTSRRAIDTQTSGAS) show a composition bias toward polar residues.

Belongs to the GatB/GatE family. GatB subfamily. Subunit of the heterotrimeric GatCAB amidotransferase (AdT) complex, composed of A, B and C subunits.

It is found in the mitochondrion. The enzyme catalyses L-glutamyl-tRNA(Gln) + L-glutamine + ATP + H2O = L-glutaminyl-tRNA(Gln) + L-glutamate + ADP + phosphate + H(+). Allows the formation of correctly charged Gln-tRNA(Gln) through the transamidation of misacylated Glu-tRNA(Gln) in the mitochondria. The reaction takes place in the presence of glutamine and ATP through an activated gamma-phospho-Glu-tRNA(Gln). This is Glutamyl-tRNA(Gln) amidotransferase subunit B, mitochondrial from Paracoccidioides brasiliensis (strain Pb18).